A 291-amino-acid chain; its full sequence is Prolyl 4-hydroxylase 5 (291 aa).

The Cytoplasmic segment spans residues 1–22; that stretch reads MASKSKQHLRYQPRKSVSRSTQ. The helical; Signal-anchor for type II membrane protein transmembrane segment at 23 to 43 threads the bilayer; sequence AFTVLILLLVVILILLGLGIL. Residues 44–291 are Extracellular-facing; sequence SLPNANRNSS…KWFHVHEFKV (248 aa). Asn51 is a glycosylation site (N-linked (GlcNAc...) asparagine). Residues 163–286 form the Fe2OG dioxygenase domain; that stretch reads NGEGLQVLHY…KWSSTKWFHV (124 aa). Fe cation contacts are provided by His181 and Asp183. Asn222 carries N-linked (GlcNAc...) asparagine glycosylation. His267 contributes to the Fe cation binding site. 2-oxoglutarate is bound at residue Lys277.

This sequence belongs to the P4HA family. It depends on Fe(2+) as a cofactor. L-ascorbate is required as a cofactor. In terms of tissue distribution, expressed in epidermal root hair cells (trichoblasts).

It is found in the endoplasmic reticulum membrane. Its subcellular location is the golgi apparatus membrane. The catalysed reaction is L-prolyl-[collagen] + 2-oxoglutarate + O2 = trans-4-hydroxy-L-prolyl-[collagen] + succinate + CO2. Functionally, catalyzes the post-translational formation of 4-hydroxyproline in -Xaa-Pro-Gly- sequences in proline-rich peptide sequences of plant glycoproteins and other proteins. Hydroxyprolines are important constituent of many plant cell wall glycoproteins such as extensins, hydroxyproline-rich glycoproteins, lectins and arabinogalactan proteins. Possesses high affinity for leucine-rich repeat and proline-rich extensins of root cell walls that are essential for root hair development. Hydroxyprolines define the subsequent O-glycosylation sites by arabinosyltransferases which elongate the O-arabinosides on extensins. The polypeptide is Prolyl 4-hydroxylase 5 (Arabidopsis thaliana (Mouse-ear cress)).